The sequence spans 200 residues: Pyrrolidone-carboxylate peptidase (200 aa).

Catalysis depends on residues E78, C141, and H165.

It belongs to the peptidase C15 family. Homotetramer.

It localises to the cytoplasm. It carries out the reaction Release of an N-terminal pyroglutamyl group from a polypeptide, the second amino acid generally not being Pro.. In terms of biological role, removes 5-oxoproline from various penultimate amino acid residues except L-proline. In Thermococcus onnurineus (strain NA1), this protein is Pyrrolidone-carboxylate peptidase.